The chain runs to 535 residues: Dipeptide-binding protein (535 aa).

A signal peptide spans 1 to 28; sequence MRISLKKSGMLKLGLSLVAMTVAASVQA. The cysteines at positions 34 and 262 are disulfide-linked. Residues 48 to 50, 383 to 385, and 433 to 436 each bind glycyl-L-leucine; these read TSG, RPY, and WTGD. Cys450 and Cys463 are oxidised to a cystine.

This sequence belongs to the bacterial solute-binding protein 5 family. The complex is composed of two ATP-binding proteins (DppD and DppF), two transmembrane proteins (DppB and DppC) and a solute-binding protein (DppA).

Its subcellular location is the periplasm. Heme binding is inhibited by dipeptide. Part of the ABC transporter DppABCDF involved in dipeptide transport. Binds dipeptides and accepts a wide range of side chains, including small neutral, bulky hydrophobic, and positively and negatively charged groups. Tripeptides are poor substrates. DppA alone controls the specificity of the Dpp transporter. In addition, plays a role in chemotaxis toward peptides via interaction with the chemotaxis protein Tap. In terms of biological role, binds heme. When a foreign outer membrane heme receptor is expressed in E.coli, DppABCDF can also transport heme and its precursor, 5-aminolevulinic acid (ALA), from the periplasm into the cytoplasm. The protein is Dipeptide-binding protein of Escherichia coli (strain K12).